The following is a 543-amino-acid chain: CBS domain-containing protein CBSCBSPB1 (543 aa).

The interval 1–35 is disordered; it reads MASQGGPRRSLSVTTASLHGKKKSMDMAERGLDTG. At Ser17 the chain carries Phosphoserine. Residues 23-35 show a composition bias toward basic and acidic residues; sequence KSMDMAERGLDTG. CBS domains lie at 59–118, 125–183, 225–285, and 293–350; these read RLSK…NVEE, MTKN…RAAE, IIPD…LPPS, and MTQN…AGTT. Positions 372 to 393 are disordered; the sequence is LSPNEDDEDSRSESSMKVASEA. The 88-residue stretch at 402–489 folds into the PB1 domain; that stretch reads ANTFSFKIED…KSLRLHLDDS (88 aa). A helical transmembrane segment spans residues 518-538; the sequence is AYSGVAAGAALVAGLGFMAFL.

The protein localises to the membrane. This is CBS domain-containing protein CBSCBSPB1 (CBSCBSPB1) from Arabidopsis thaliana (Mouse-ear cress).